The chain runs to 74 residues: Small ribosomal subunit protein bS18 (74 aa).

The protein belongs to the bacterial ribosomal protein bS18 family. In terms of assembly, part of the 30S ribosomal subunit. Forms a tight heterodimer with protein bS6.

Binds as a heterodimer with protein bS6 to the central domain of the 16S rRNA, where it helps stabilize the platform of the 30S subunit. The protein is Small ribosomal subunit protein bS18 of Thioalkalivibrio sulfidiphilus (strain HL-EbGR7).